Here is a 557-residue protein sequence, read N- to C-terminus: Nucleoprotein (557 aa).

Positions 54–235 (MRKDKRSDDD…ITKEESANNI (182 aa)) are binding site for the cap structure m7GTP. The Mn(2+) site is built by D379 and E381. Residues E389, C496, H499, and C518 each coordinate Zn(2+). D522 is a Mn(2+) binding site.

This sequence belongs to the arenaviridae nucleocapsid protein family. In terms of assembly, homomultimerizes to form the nucleocapsid. Binds to viral genomic RNA. Interacts with glycoprotein G2. Interacts with protein Z; this interaction probably directs the encapsidated genome to budding sites. Interacts with protein L; this interaction does not interfere with Z-L interaction. Interacts with host IKBKE (via Protein kinase domain); the interaction inhibits IKBKE kinase activity.

The protein localises to the virion. It localises to the host cytoplasm. Functionally, encapsidates the genome, protecting it from nucleases. The encapsidated genomic RNA is termed the nucleocapsid (NC). Serves as template for viral transcription and replication. The increased presence of protein N in host cell does not seem to trigger the switch from transcription to replication as observed in other negative strain RNA viruses. Through the interaction with host IKBKE, strongly inhibits the phosphorylation and nuclear translocation of host IRF3, a protein involved in interferon activation pathway, leading to the inhibition of interferon-beta and IRF3-dependent promoters activation. Also encodes a functional 3'-5' exoribonuclease that degrades preferentially dsRNA substrates and thereby participates in the suppression of interferon induction. This chain is Nucleoprotein, found in Calomys callosus (Large vesper mouse).